We begin with the raw amino-acid sequence, 393 residues long: METFLFTSESVNEGHPDKLCDQISDAVLDACLEQDPDSKVACETCTKTNMVMVFGEITTKATVDYEKIVRDTCRSIGFISDDVGLDADKCKVLVNIEQQSPDIAQGVHGHFTKRPEDIGAGDQGHMFGYATDETPELMPLSHVLATKIGAKLTEVRKNGTCRWLRPDGKTQVTVEYYNDNGAMVPVRVHTVLISTQHDETVTNEEIARDLKEHVIKPIIPEKYLDDKTIFHLNPSGRFVIGGPDGDAGLTGRKIIIDTYGGWGAHGGGAFSGKDPTKVDRSGAYIVRQSAKSVVANGMARRALVQVSYAIGVPEPFSVFVDTYGTGLIPDKEILKIVKESFDFRPGMMTINLDLKRGGNGRFLKTAAYGHFGRDDPDFTWEVVKPLKWDKPQA.

Glu-9 provides a ligand contact to Mg(2+). His-15 is an ATP binding site. Glu-43 is a K(+) binding site. L-methionine is bound by residues Glu-56 and Gln-99. ATP is bound by residues 167–169 (DGK), 235–238 (SGRF), Asp-246, 252–253 (RK), Ala-269, Lys-273, and Lys-277. Position 246 (Asp-246) interacts with L-methionine. Residue Lys-277 participates in L-methionine binding.

This sequence belongs to the AdoMet synthase family. As to quaternary structure, homotetramer. It depends on Mn(2+) as a cofactor. Mg(2+) is required as a cofactor. Requires Co(2+) as cofactor. The cofactor is K(+).

The protein resides in the cytoplasm. The catalysed reaction is L-methionine + ATP + H2O = S-adenosyl-L-methionine + phosphate + diphosphate. Its pathway is amino-acid biosynthesis; S-adenosyl-L-methionine biosynthesis; S-adenosyl-L-methionine from L-methionine: step 1/1. Its function is as follows. Catalyzes the formation of S-adenosylmethionine from methionine and ATP. The reaction comprises two steps that are both catalyzed by the same enzyme: formation of S-adenosylmethionine (AdoMet) and triphosphate, and subsequent hydrolysis of the triphosphate. In Brassica juncea (Indian mustard), this protein is S-adenosylmethionine synthase 1 (SAMS1).